The sequence spans 231 residues: MGQKVHPIGFRLGITQKHRSYWCTTPQKSALWIQDASFLRNFIKKKYIGAGITHIEIQRQDVDSPSLGIQIYAARLRQIAGNDSKGLERLQEELVKQLQIFYRKRNLVEPGTIHLRLSVKPLRAPEAYAEVLAEKLVEELEQRKPFRRAMRQTVQRALRAGVKGIKVQISGRLNGADIARSEDVREGPVPLQTLRADIDYSSKPAKTIFGLLGIKIWVFRGERLTRISNVR.

A KH type-2 domain is found at 39 to 123; that stretch reads LRNFIKKKYI…HLRLSVKPLR (85 aa).

Belongs to the universal ribosomal protein uS3 family. Part of the 30S ribosomal subunit.

The protein resides in the plastid. The protein localises to the chloroplast. This is Small ribosomal subunit protein uS3c (rps3) from Chlorella vulgaris (Green alga).